A 105-amino-acid chain; its full sequence is Small ribosomal subunit protein uS10 (105 aa).

This sequence belongs to the universal ribosomal protein uS10 family. In terms of assembly, part of the 30S ribosomal subunit.

Functionally, involved in the binding of tRNA to the ribosomes. The chain is Small ribosomal subunit protein uS10 from Chlamydia muridarum (strain MoPn / Nigg).